The primary structure comprises 103 residues: Pyrimidine/purine nucleoside phosphorylase (103 aa).

It belongs to the nucleoside phosphorylase PpnP family.

It catalyses the reaction a purine D-ribonucleoside + phosphate = a purine nucleobase + alpha-D-ribose 1-phosphate. The catalysed reaction is adenosine + phosphate = alpha-D-ribose 1-phosphate + adenine. The enzyme catalyses cytidine + phosphate = cytosine + alpha-D-ribose 1-phosphate. It carries out the reaction guanosine + phosphate = alpha-D-ribose 1-phosphate + guanine. It catalyses the reaction inosine + phosphate = alpha-D-ribose 1-phosphate + hypoxanthine. The catalysed reaction is thymidine + phosphate = 2-deoxy-alpha-D-ribose 1-phosphate + thymine. The enzyme catalyses uridine + phosphate = alpha-D-ribose 1-phosphate + uracil. It carries out the reaction xanthosine + phosphate = alpha-D-ribose 1-phosphate + xanthine. In terms of biological role, catalyzes the phosphorolysis of diverse nucleosides, yielding D-ribose 1-phosphate and the respective free bases. Can use uridine, adenosine, guanosine, cytidine, thymidine, inosine and xanthosine as substrates. Also catalyzes the reverse reactions. This chain is Pyrimidine/purine nucleoside phosphorylase, found in Geobacter sp. (strain M21).